We begin with the raw amino-acid sequence, 151 residues long: UPF0756 membrane protein Lreu_0946 (151 aa).

4 helical membrane passes run 4–24, 52–72, 77–97, and 115–135; these read WLFL…SLII, WGVT…QIGF, AAFK…VAIL, and LVLG…GPVI.

The protein belongs to the UPF0756 family.

The protein resides in the cell membrane. The chain is UPF0756 membrane protein Lreu_0946 from Limosilactobacillus reuteri (strain DSM 20016) (Lactobacillus reuteri).